Here is a 682-residue protein sequence, read N- to C-terminus: Potassium-transporting ATPase ATP-binding subunit (682 aa).

4 helical membrane-spanning segments follow: residues 44-64 (VMAVVMGGTLLAAVITASGHG), 66-86 (AGFGWAVTAILFVTVLFGNFA), 233-253 (LTFLIVVASLPAIAGFVGVTL), and 257-277 (LLIALLVCLIPTTIGGLLPAI). The active-site 4-aspartylphosphate intermediate is the aspartate 310. Residues aspartate 347, glutamate 351, 377 to 384 (FTAQTRMS), and lysine 395 each bind ATP. Aspartate 518 and aspartate 522 together coordinate Mg(2+). 3 helical membrane passes run 588–608 (FAILPALFAAAIPSMAALNVM), 616–636 (AVLAALIFNALIIPALIPLAL), and 658–678 (GLGGVLLPFAAIKLIDLALVA).

Belongs to the cation transport ATPase (P-type) (TC 3.A.3) family. Type IA subfamily. In terms of assembly, the system is composed of three essential subunits: KdpA, KdpB and KdpC.

It is found in the cell inner membrane. It carries out the reaction K(+)(out) + ATP + H2O = K(+)(in) + ADP + phosphate + H(+). Its function is as follows. Part of the high-affinity ATP-driven potassium transport (or Kdp) system, which catalyzes the hydrolysis of ATP coupled with the electrogenic transport of potassium into the cytoplasm. This subunit is responsible for energy coupling to the transport system and for the release of the potassium ions to the cytoplasm. This is Potassium-transporting ATPase ATP-binding subunit from Xanthomonas campestris pv. campestris (strain ATCC 33913 / DSM 3586 / NCPPB 528 / LMG 568 / P 25).